A 141-amino-acid polypeptide reads, in one-letter code: Putative 8-oxo-dGTP diphosphatase 2 (141 aa).

The Nudix hydrolase domain occupies 2–131 (LNQIVVAGAI…WIADLARTLN (130 aa)). Gly37, Glu52, Glu55, and Glu56 together coordinate Mg(2+). Positions 37-58 (GKVAAGETERAALARELAEELG) match the Nudix box motif.

The protein belongs to the Nudix hydrolase family. Requires Mg(2+) as cofactor. Mn(2+) serves as cofactor.

It carries out the reaction 8-oxo-dGTP + H2O = 8-oxo-dGMP + diphosphate + H(+). Functionally, may be involved in the GO system responsible for removing an oxidatively damaged form of guanine (7,8-dihydro-8-oxoguanine, 8-oxo-dGTP) from DNA and the nucleotide pool. 8-oxo-dGTP is inserted opposite dA and dC residues of template DNA with almost equal efficiency thus leading to A.T to G.C transversions. MutT specifically degrades 8-oxo-dGTP to the monophosphate. The polypeptide is Putative 8-oxo-dGTP diphosphatase 2 (mutT2) (Mycobacterium tuberculosis (strain CDC 1551 / Oshkosh)).